The chain runs to 411 residues: Dipeptidase 1 (411 aa).

The first 16 residues, 1–16, serve as a signal peptide directing secretion; that stretch reads MWSGWWLWPLVAVCTA. The Zn(2+) site is built by His36 and Asp38. Residue Asn57 is glycosylated (N-linked (GlcNAc...) asparagine). An intrachain disulfide couples Cys87 to Cys170. Glu141 contributes to the Zn(2+) binding site. His168 lines the substrate pocket. Zn(2+) is bound by residues His214 and His235. Residues Cys242 and Cys274 are joined by a disulfide bond. Substrate is bound at residue Arg246. Residue Asn279 is glycosylated (N-linked (GlcNAc...) asparagine). Residue Asp304 participates in substrate binding. N-linked (GlcNAc...) asparagine glycans are attached at residues Asn332 and Asn358. Residue Ser385 is the site of GPI-anchor amidated serine attachment. Positions 386 to 411 are cleaved as a propeptide — removed in mature form; the sequence is GASSLHRHWGLLLASLAPLVLCLSLL.

Belongs to the metallo-dependent hydrolases superfamily. Peptidase M19 family. Homodimer; disulfide-linked. The cofactor is Zn(2+). In terms of tissue distribution, expressed in lung and kidneys.

It localises to the apical cell membrane. The protein localises to the cell projection. Its subcellular location is the microvillus membrane. The catalysed reaction is an L-aminoacyl-L-amino acid + H2O = 2 an L-alpha-amino acid. It carries out the reaction leukotriene D4 + H2O = leukotriene E4 + glycine. The enzyme catalyses a beta-lactam + H2O = a substituted beta-amino acid. It catalyses the reaction L-cystine-bis-glycine + 2 H2O = L-cystine + 2 glycine. The catalysed reaction is glycyldehydrophenylalanine + H2O = 2,3-didehydrophenylalanine + glycine. Inhibited by L-penicillamine. Beta-lactamase activity is inhibited by cilastatin. Hydrolyzes a wide range of dipeptides including the conversion of leukotriene D4 to leukotriene E4. Hydrolyzes cystinyl-bis-glycine (cys-bis-gly) formed during glutathione degradation. Also possesses beta lactamase activity and can hydrolyze the beta-lactam antibiotic imipenem. Functionally, independently of its dipeptidase activity, acts as an adhesion receptor for neutrophil recruitment from bloodstream into inflamed lungs and liver. This chain is Dipeptidase 1 (DPEP1), found in Homo sapiens (Human).